Consider the following 74-residue polypeptide: Cytochrome b559 subunit alpha (74 aa).

The helical transmembrane segment at valine 22–tryptophan 36 threads the bilayer. Histidine 24 contacts heme.

The protein belongs to the PsbE/PsbF family. In terms of assembly, heterodimer of an alpha subunit and a beta subunit. PSII is composed of 1 copy each of membrane proteins PsbA, PsbB, PsbC, PsbD, PsbE, PsbF, PsbH, PsbI, PsbJ, PsbK, PsbL, PsbM, PsbT, PsbX, PsbY, PsbZ, Psb30/Ycf12, at least 3 peripheral proteins of the oxygen-evolving complex and a large number of cofactors. It forms dimeric complexes. Requires heme b as cofactor.

The protein localises to the plastid. The protein resides in the cyanelle thylakoid membrane. This b-type cytochrome is tightly associated with the reaction center of photosystem II (PSII). PSII is a light-driven water:plastoquinone oxidoreductase that uses light energy to abstract electrons from H(2)O, generating O(2) and a proton gradient subsequently used for ATP formation. It consists of a core antenna complex that captures photons, and an electron transfer chain that converts photonic excitation into a charge separation. This is Cytochrome b559 subunit alpha from Cyanophora paradoxa.